Consider the following 311-residue polypeptide: Probable porphobilinogen deaminase (311 aa).

Residue cysteine 237 is modified to S-(dipyrrolylmethanemethyl)cysteine. Positions 270–289 are disordered; sequence SKTGDKNNPKSLGQSAGEEL.

This sequence belongs to the HMBS family. Dipyrromethane is required as a cofactor.

It carries out the reaction 4 porphobilinogen + H2O = hydroxymethylbilane + 4 NH4(+). Its pathway is porphyrin-containing compound metabolism; protoporphyrin-IX biosynthesis; coproporphyrinogen-III from 5-aminolevulinate: step 2/4. Tetrapolymerization of the monopyrrole PBG into the hydroxymethylbilane pre-uroporphyrinogen in several discrete steps. This is Probable porphobilinogen deaminase from Nitrosopumilus maritimus (strain SCM1).